A 333-amino-acid chain; its full sequence is Glycerol-3-phosphate dehydrogenase [NAD(P)+] (333 aa).

Positions 12, 33, and 105 each coordinate NADPH. K105, G136, and S138 together coordinate sn-glycerol 3-phosphate. A140 provides a ligand contact to NADPH. K191, D244, S254, R255, and N256 together coordinate sn-glycerol 3-phosphate. The active-site Proton acceptor is K191. An NADPH-binding site is contributed by R255. NADPH is bound by residues V279 and E281.

This sequence belongs to the NAD-dependent glycerol-3-phosphate dehydrogenase family.

Its subcellular location is the cytoplasm. It carries out the reaction sn-glycerol 3-phosphate + NAD(+) = dihydroxyacetone phosphate + NADH + H(+). It catalyses the reaction sn-glycerol 3-phosphate + NADP(+) = dihydroxyacetone phosphate + NADPH + H(+). It participates in membrane lipid metabolism; glycerophospholipid metabolism. In terms of biological role, catalyzes the reduction of the glycolytic intermediate dihydroxyacetone phosphate (DHAP) to sn-glycerol 3-phosphate (G3P), the key precursor for phospholipid synthesis. The chain is Glycerol-3-phosphate dehydrogenase [NAD(P)+] from Protochlamydia amoebophila (strain UWE25).